The primary structure comprises 174 residues: Transcriptional repressor NrdR (174 aa).

Residues 3–34 (CPFCQHSDTRVIDSRVSEDGTTIRRRRECEAC) fold into a zinc finger. Positions 49-139 (PTVVKSDGGR…VYRSFQDVAD (91 aa)) constitute an ATP-cone domain.

The protein belongs to the NrdR family. Zn(2+) is required as a cofactor.

Functionally, negatively regulates transcription of bacterial ribonucleotide reductase nrd genes and operons by binding to NrdR-boxes. The sequence is that of Transcriptional repressor NrdR from Xanthomonas oryzae pv. oryzae (strain MAFF 311018).